We begin with the raw amino-acid sequence, 401 residues long: 8-amino-7-oxononanoate synthase (401 aa).

Arginine 19 contributes to the substrate binding site. 106–107 (GY) is a binding site for pyridoxal 5'-phosphate. A substrate-binding site is contributed by histidine 131. 3 residues coordinate pyridoxal 5'-phosphate: serine 176, histidine 204, and threonine 233. N6-(pyridoxal phosphate)lysine is present on lysine 236. Substrate is bound at residue threonine 350.

The protein belongs to the class-II pyridoxal-phosphate-dependent aminotransferase family. BioF subfamily. In terms of assembly, homodimer. Pyridoxal 5'-phosphate serves as cofactor.

The enzyme catalyses 6-carboxyhexanoyl-[ACP] + L-alanine + H(+) = (8S)-8-amino-7-oxononanoate + holo-[ACP] + CO2. It participates in cofactor biosynthesis; biotin biosynthesis. Catalyzes the decarboxylative condensation of pimeloyl-[acyl-carrier protein] and L-alanine to produce 8-amino-7-oxononanoate (AON), [acyl-carrier protein], and carbon dioxide. In Pseudomonas paraeruginosa (strain DSM 24068 / PA7) (Pseudomonas aeruginosa (strain PA7)), this protein is 8-amino-7-oxononanoate synthase.